Reading from the N-terminus, the 704-residue chain is Elongation factor G (704 aa).

The tr-type G domain occupies 8–290 (ARYRNIGISA…AVIDYLPSPV (283 aa)). GTP contacts are provided by residues 17–24 (AHIDAGKT), 88–92 (DTPGH), and 142–145 (NKMD).

Belongs to the TRAFAC class translation factor GTPase superfamily. Classic translation factor GTPase family. EF-G/EF-2 subfamily.

Its subcellular location is the cytoplasm. Its function is as follows. Catalyzes the GTP-dependent ribosomal translocation step during translation elongation. During this step, the ribosome changes from the pre-translocational (PRE) to the post-translocational (POST) state as the newly formed A-site-bound peptidyl-tRNA and P-site-bound deacylated tRNA move to the P and E sites, respectively. Catalyzes the coordinated movement of the two tRNA molecules, the mRNA and conformational changes in the ribosome. In Salmonella agona (strain SL483), this protein is Elongation factor G.